Consider the following 406-residue polypeptide: UPF0754 membrane protein SYNPCC7002_A1087 (406 aa).

Residues 384–404 (IVNLGGVLGFLVGVAQSVILL) traverse the membrane as a helical segment.

It belongs to the UPF0754 family.

Its subcellular location is the cell inner membrane. This chain is UPF0754 membrane protein SYNPCC7002_A1087, found in Picosynechococcus sp. (strain ATCC 27264 / PCC 7002 / PR-6) (Agmenellum quadruplicatum).